A 133-amino-acid chain; its full sequence is MNVGDLKSANDLYESVRSIEGVTGVHLFRIRDAGILKSTMIPELDALTTISLDELNKSPTVFTKNLLQGCGGTDLDVPAELKRLVIFVCNILESCNEFTDLGSARLLRLTFDSCQLVIMYDSLFVVAITKDET.

It is found in the cytoplasm. The protein localises to the nucleus. In terms of biological role, has a role in meiosis. In Schizosaccharomyces pombe (strain 972 / ATCC 24843) (Fission yeast), this protein is Meiotically up-regulated gene 15 protein (mug15).